The following is a 546-amino-acid chain: Glucose-6-phosphate isomerase (546 aa).

Glu357 acts as the Proton donor in catalysis. Residues His389 and Lys509 contribute to the active site.

Belongs to the GPI family.

It localises to the cytoplasm. It catalyses the reaction alpha-D-glucose 6-phosphate = beta-D-fructose 6-phosphate. It functions in the pathway carbohydrate biosynthesis; gluconeogenesis. Its pathway is carbohydrate degradation; glycolysis; D-glyceraldehyde 3-phosphate and glycerone phosphate from D-glucose: step 2/4. Catalyzes the reversible isomerization of glucose-6-phosphate to fructose-6-phosphate. In Anaeromyxobacter dehalogenans (strain 2CP-1 / ATCC BAA-258), this protein is Glucose-6-phosphate isomerase.